The sequence spans 446 residues: Probable D-serine dehydratase (446 aa).

K116 is modified (N6-(pyridoxal phosphate)lysine).

This sequence belongs to the serine/threonine dehydratase family. DsdA subfamily. Pyridoxal 5'-phosphate is required as a cofactor.

It catalyses the reaction D-serine = pyruvate + NH4(+). In Bacillus cereus (strain 03BB102), this protein is Probable D-serine dehydratase.